The sequence spans 28 residues: fur leader peptide (28 aa).

In terms of biological role, cotranscribed with fur, it is essential for fur translation. The fur ribosomal binding site (RBS) is occluded by the 5'-mRNA secondary structure, which is opened by uof translation. This is fur leader peptide (uof) from Escherichia coli (strain K12).